Reading from the N-terminus, the 413-residue chain is MDLLGTTGAVAISLYAALSTAYKGMQAIYALPTNTTAASTPVTGSGAPPSVDVIVPCYNEDPRALSACLASIAKQDYAGELRVYVVDDGSGNRNAIIPVHDHYACDPRFRFILMPKNVGKRKAQIVAIRESSGDLVLNVDSDTTIAPDVVTKLALKMYSPAVGAAMGQLTASNRSDTWLTRLIDMEYWLACNEERAAQARFGAVMCCCGPCAMYRRSALLLLLDKYETQLFRGRPSDFGEDRHLTILMLNAGFRTEYVPEAIAATVVPNSMGAYLRQQLRWARSTFRDTLLALRLLPGLDRYLTLDVIGQNLGPLLLALSVLTGLAQLALTATVPWSTILMIASMTMVRCGVAAFRARELRFLGFSLHTLLNVALLLPLKAYALCTLSNSDWLSRGSPAAAPNGVKDSPEPHC.

Belongs to the NodC/HAS family.

It is found in the cell membrane. In terms of biological role, involved in the synthesis of Nod factor, a sulfated N-acyl-beta-1,4-tetrasaccharide of N-acetylglucosamine which initiates a series of events in the host plant species leading eventually to nodulation. In Sinorhizobium fredii (strain NBRC 101917 / NGR234), this protein is N-acetylglucosaminyltransferase (nodC).